We begin with the raw amino-acid sequence, 364 residues long: Leucine dehydrogenase (364 aa).

Residue K80 is part of the active site. 180–186 (GVGNVAY) contributes to the NAD(+) binding site.

The protein belongs to the Glu/Leu/Phe/Val dehydrogenases family.

The enzyme catalyses L-leucine + NAD(+) + H2O = 4-methyl-2-oxopentanoate + NH4(+) + NADH + H(+). The protein operates within amino-acid degradation; L-leucine degradation; 4-methyl-2-oxopentanoate from L-leucine (dehydrogenase route): step 1/1. Functionally, catalyzes the reversible deamination of L-leucine to 4-methyl-2-oxopentanoate. The protein is Leucine dehydrogenase (yqiT) of Bacillus subtilis (strain 168).